The chain runs to 483 residues: Docking protein 1 (483 aa).

Met-1 is subject to N-acetylmethionine. The PH domain maps to 4–119; that stretch reads AVMEGPLFLQ…WVQTLCQNAF (116 aa). Position 48 is a phosphoserine (Ser-48). Positions 151-259 constitute an IRS-type PTB domain; that stretch reads EGSQFWVTVQ…HRQKIQGKAG (109 aa). Ser-269 and Ser-291 each carry phosphoserine. The segment at 293 to 326 is disordered; that stretch reads PALYSEPLDSLRIPPGPSQDSLYSDPLDSTPARA. Phosphotyrosine is present on residues Tyr-296, Tyr-337, Tyr-362, Tyr-377, Tyr-398, and Tyr-409. Residues 409–483 form a disordered region; sequence YAVPPPRSTK…RTGAKSEGST (75 aa). Pro residues predominate over residues 411–424; it reads VPPPRSTKPFPAPK. Position 416 is a phosphoserine (Ser-416). Polar residues predominate over residues 434–460; the sequence is GAATGSGSQGHSSDTALYSQVQKSGAS. Residue Tyr-451 is modified to Phosphotyrosine. At Ser-462 the chain carries Phosphoserine.

The protein belongs to the DOK family. Type A subfamily. As to quaternary structure, interacts with RasGAP, INPP5D/SHIP1 and ABL1. Interacts directly with phosphorylated ITGB3. Interacts with SRMS (via the SH2 and SH3 domains). Post-translationally, constitutively tyrosine-phosphorylated. Phosphorylated by TEC. Phosphorylated by LYN. Phosphorylated on tyrosine residues by the insulin receptor kinase. Results in the negative regulation of the insulin signaling pathway. Phosphorylated on tyrosine residues by SRMS.

It is found in the cytoplasm. Its subcellular location is the nucleus. Functionally, DOK proteins are enzymatically inert adaptor or scaffolding proteins. They provide a docking platform for the assembly of multimolecular signaling complexes. DOK1 appears to be a negative regulator of the insulin signaling pathway. Modulates integrin activation by competing with talin for the same binding site on ITGB3. The polypeptide is Docking protein 1 (DOK1) (Bos taurus (Bovine)).